Reading from the N-terminus, the 277-residue chain is 5-formyltetrahydrofolate cyclo-ligase, mitochondrial (277 aa).

The transit peptide at 1–48 directs the protein to the mitochondrion; sequence MIGARVFCITTTALRRSPIFFFPKIPTRPVFRLSPATRPIVAMSTTSK. An ATP-binding site is contributed by 60-64; sequence KRVVR. Residues Glu-113 and 207–211 contribute to the substrate site; that span reads RGGGY. Residues 206-213 and Asp-254 contribute to the ATP site; that span reads GRGGGYYD.

The protein belongs to the 5-formyltetrahydrofolate cyclo-ligase family. Monomer.

The protein resides in the mitochondrion. The catalysed reaction is (6S)-5-formyl-5,6,7,8-tetrahydrofolate + ATP = (6R)-5,10-methenyltetrahydrofolate + ADP + phosphate. In terms of biological role, contributes to tetrahydrofolate metabolism and photorespiration through the regulation of serine hydroxymethyltransferase. Prefers the pentalutamyl to the monoglutamyl form of 5-formyltetrahydrofolate. In Arabidopsis thaliana (Mouse-ear cress), this protein is 5-formyltetrahydrofolate cyclo-ligase, mitochondrial (5FCL).